A 192-amino-acid polypeptide reads, in one-letter code: uncharacterized protein (192 aa).

Residues 29–160 (HRQAAVLIPI…PLDIYRRGDS (132 aa)) enclose the Nudix hydrolase domain. A Nudix box motif is present at residues 67–89 (GAVDDTDASVIAAALREAEEEVA). E83 and E87 together coordinate Mg(2+).

Belongs to the Nudix hydrolase family. PCD1 subfamily. Mn(2+) serves as cofactor. Mg(2+) is required as a cofactor.

In terms of biological role, probably mediates the hydrolysis of some nucleoside diphosphate derivatives. This is an uncharacterized protein from Shigella sonnei (strain Ss046).